A 119-amino-acid chain; its full sequence is Ribonuclease P protein component (119 aa).

The protein belongs to the RnpA family. In terms of assembly, consists of a catalytic RNA component (M1 or rnpB) and a protein subunit.

It carries out the reaction Endonucleolytic cleavage of RNA, removing 5'-extranucleotides from tRNA precursor.. In terms of biological role, RNaseP catalyzes the removal of the 5'-leader sequence from pre-tRNA to produce the mature 5'-terminus. It can also cleave other RNA substrates such as 4.5S RNA. The protein component plays an auxiliary but essential role in vivo by binding to the 5'-leader sequence and broadening the substrate specificity of the ribozyme. The chain is Ribonuclease P protein component from Halalkalibacterium halodurans (strain ATCC BAA-125 / DSM 18197 / FERM 7344 / JCM 9153 / C-125) (Bacillus halodurans).